The primary structure comprises 166 residues: NAD(P)H-quinone oxidoreductase subunit I, chloroplastic (166 aa).

4Fe-4S ferredoxin-type domains are found at residues 55-84 (GRIH…VDWK) and 95-124 (LNYS…MTEE). 8 residues coordinate [4Fe-4S] cluster: Cys64, Cys67, Cys70, Cys74, Cys104, Cys107, Cys110, and Cys114.

Belongs to the complex I 23 kDa subunit family. As to quaternary structure, NDH is composed of at least 16 different subunits, 5 of which are encoded in the nucleus. Requires [4Fe-4S] cluster as cofactor.

The protein localises to the plastid. The protein resides in the chloroplast thylakoid membrane. It carries out the reaction a plastoquinone + NADH + (n+1) H(+)(in) = a plastoquinol + NAD(+) + n H(+)(out). The catalysed reaction is a plastoquinone + NADPH + (n+1) H(+)(in) = a plastoquinol + NADP(+) + n H(+)(out). NDH shuttles electrons from NAD(P)H:plastoquinone, via FMN and iron-sulfur (Fe-S) centers, to quinones in the photosynthetic chain and possibly in a chloroplast respiratory chain. The immediate electron acceptor for the enzyme in this species is believed to be plastoquinone. Couples the redox reaction to proton translocation, and thus conserves the redox energy in a proton gradient. This chain is NAD(P)H-quinone oxidoreductase subunit I, chloroplastic, found in Lactuca sativa (Garden lettuce).